Here is a 479-residue protein sequence, read N- to C-terminus: Probable polyamine transporter At3g19553 (479 aa).

The next 12 helical transmembrane spans lie at 22–42 (LTLLPLVFLIFYEVSGGPFGV), 53–73 (LLALLGFLIFPLIWSIPEALV), 86–106 (GYVVWISSAFGPFWGFQEGFW), 130–150 (FPVLDHVAARVPALLVITFSL), 160–180 (IVGFSAVVLAVFSLCPFVVMA), 236–256 (ALFGAVLLVMGSYLIPLMAGT), 275–295 (VGMLIGGVWLKGWIQAAAAMS), 304–324 (MSSDAFQLLGMSEIGMLPAFF), 332–352 (TPTISILCSATGVIFLSWMSF), 355–375 (IIEFLNFLYALGMLLEFAAFV), 395–415 (FGVSMLCLPPSLLVILVMVLA), and 420–440 (FLISGVIIVLGFCLYPFLTLV). The interval 454–479 (RPVSGVSSESQLDEEHGDESAASLLP) is disordered.

This sequence belongs to the amino acid-polyamine-organocation (APC) superfamily. Polyamine:cation symporter (PHS) (TC 2.A.3.12) family.

It localises to the cell membrane. In terms of biological role, probable cell membrane polyamine/proton symporter involved in the polyamine uptake in cells. The protein is Probable polyamine transporter At3g19553 of Arabidopsis thaliana (Mouse-ear cress).